The chain runs to 295 residues: NAD kinase (295 aa).

The active-site Proton acceptor is the aspartate 72. NAD(+) is bound by residues 72 to 73 (DG), 146 to 147 (ND), arginine 157, lysine 174, aspartate 176, 187 to 192 (TAYALS), and glutamine 247.

Belongs to the NAD kinase family. A divalent metal cation serves as cofactor.

The protein resides in the cytoplasm. It carries out the reaction NAD(+) + ATP = ADP + NADP(+) + H(+). In terms of biological role, involved in the regulation of the intracellular balance of NAD and NADP, and is a key enzyme in the biosynthesis of NADP. Catalyzes specifically the phosphorylation on 2'-hydroxyl of the adenosine moiety of NAD to yield NADP. The protein is NAD kinase of Pseudomonas aeruginosa (strain LESB58).